A 368-amino-acid polypeptide reads, in one-letter code: uncharacterized protein (368 aa).

Its function is as follows. Might be involved in sporulation. This is an uncharacterized protein from Brachyspira hyodysenteriae (strain ATCC 49526 / WA1).